The chain runs to 146 residues: D-aminoacyl-tRNA deacylase (146 aa).

Positions 138–139 match the Gly-cisPro motif, important for rejection of L-amino acids motif; that stretch reads GP.

This sequence belongs to the DTD family. As to quaternary structure, homodimer.

It localises to the cytoplasm. It catalyses the reaction glycyl-tRNA(Ala) + H2O = tRNA(Ala) + glycine + H(+). The enzyme catalyses a D-aminoacyl-tRNA + H2O = a tRNA + a D-alpha-amino acid + H(+). Its function is as follows. An aminoacyl-tRNA editing enzyme that deacylates mischarged D-aminoacyl-tRNAs. Also deacylates mischarged glycyl-tRNA(Ala), protecting cells against glycine mischarging by AlaRS. Acts via tRNA-based rather than protein-based catalysis; rejects L-amino acids rather than detecting D-amino acids in the active site. By recycling D-aminoacyl-tRNA to D-amino acids and free tRNA molecules, this enzyme counteracts the toxicity associated with the formation of D-aminoacyl-tRNA entities in vivo and helps enforce protein L-homochirality. This chain is D-aminoacyl-tRNA deacylase, found in Stenotrophomonas maltophilia (strain K279a).